Consider the following 745-residue polypeptide: Probable xanthine dehydrogenase subunit D (745 aa).

3 residues coordinate Mo-molybdopterin: glutamine 204, phenylalanine 235, and alanine 508.

The protein belongs to the xanthine dehydrogenase family. In terms of assembly, could be composed of four subunits: PucA, PucC, PucD and PucE. Mo-molybdopterin serves as cofactor.

It carries out the reaction xanthine + NAD(+) + H2O = urate + NADH + H(+). The enzyme catalyses hypoxanthine + NAD(+) + H2O = xanthine + NADH + H(+). Its pathway is purine metabolism; hypoxanthine degradation; urate from hypoxanthine: step 1/2. The protein operates within purine metabolism; hypoxanthine degradation; urate from hypoxanthine: step 2/2. In terms of biological role, oxidizes hypoxanthine and xanthine to uric acid. The protein is Probable xanthine dehydrogenase subunit D (pucD) of Bacillus subtilis (strain 168).